The chain runs to 264 residues: Regulatory protein RecX (264 aa).

The protein belongs to the RecX family.

It localises to the cytoplasm. Its function is as follows. Modulates RecA activity. The sequence is that of Regulatory protein RecX from Lacticaseibacillus casei (strain BL23) (Lactobacillus casei).